A 513-amino-acid chain; its full sequence is 2,3-bisphosphoglycerate-independent phosphoglycerate mutase (513 aa).

2 residues coordinate Mn(2+): Asp-13 and Ser-63. The Phosphoserine intermediate role is filled by Ser-63. Residues His-124, 154–155 (RD), Arg-186, Arg-192, 262–265 (RADR), and Lys-335 contribute to the substrate site. Positions 402, 406, 443, 444, and 462 each coordinate Mn(2+).

It belongs to the BPG-independent phosphoglycerate mutase family. As to quaternary structure, monomer. Mn(2+) is required as a cofactor.

It catalyses the reaction (2R)-2-phosphoglycerate = (2R)-3-phosphoglycerate. It functions in the pathway carbohydrate degradation; glycolysis; pyruvate from D-glyceraldehyde 3-phosphate: step 3/5. In terms of biological role, catalyzes the interconversion of 2-phosphoglycerate and 3-phosphoglycerate. This is 2,3-bisphosphoglycerate-independent phosphoglycerate mutase from Shewanella frigidimarina (strain NCIMB 400).